A 279-amino-acid chain; its full sequence is MSIDGLPPLRDVIERHGLQAKKALGQNFLLDLNLTGKIARSAGDLTNTAVIEVGPGPGGLTRALLSNGARRVVAIERDERCLAALAEVSAHYPGRLEVVSGDALKTDFAALASAAGGASGQVRIVANLPYNIGTELLVRWLTVVDWPPFYASMTLMFQREVAQRIVAEPGSDAYGRLGVLAGWRTKARIAFDVPPQAFTPPPKVTSSVVHLEPRATPLPADVKKLGRVTEAAFGQRRKMLRQSVKSLGGEALLERAGIDPTRRAETLSVEEFVRLTNSV.

6 residues coordinate S-adenosyl-L-methionine: N27, L29, G54, E76, D102, and N127.

This sequence belongs to the class I-like SAM-binding methyltransferase superfamily. rRNA adenine N(6)-methyltransferase family. RsmA subfamily.

The protein localises to the cytoplasm. The enzyme catalyses adenosine(1518)/adenosine(1519) in 16S rRNA + 4 S-adenosyl-L-methionine = N(6)-dimethyladenosine(1518)/N(6)-dimethyladenosine(1519) in 16S rRNA + 4 S-adenosyl-L-homocysteine + 4 H(+). Its function is as follows. Specifically dimethylates two adjacent adenosines (A1518 and A1519) in the loop of a conserved hairpin near the 3'-end of 16S rRNA in the 30S particle. May play a critical role in biogenesis of 30S subunits. The protein is Ribosomal RNA small subunit methyltransferase A of Mesorhizobium japonicum (strain LMG 29417 / CECT 9101 / MAFF 303099) (Mesorhizobium loti (strain MAFF 303099)).